A 680-amino-acid polypeptide reads, in one-letter code: Nodulation protein NolNO (680 aa).

This sequence belongs to the NodU/CmcH family.

It localises to the cytoplasm. Its function is as follows. Involved in the O-carbamoylation of nod factors. This Sinorhizobium fredii (strain NBRC 101917 / NGR234) protein is Nodulation protein NolNO (nolO).